Consider the following 406-residue polypeptide: Arginine biosynthesis bifunctional protein ArgJ (406 aa).

Residues threonine 154, lysine 180, threonine 191, glutamate 278, asparagine 401, and threonine 406 each contribute to the substrate site. The active-site Nucleophile is the threonine 191.

Belongs to the ArgJ family. Heterotetramer of two alpha and two beta chains.

Its subcellular location is the cytoplasm. The catalysed reaction is N(2)-acetyl-L-ornithine + L-glutamate = N-acetyl-L-glutamate + L-ornithine. The enzyme catalyses L-glutamate + acetyl-CoA = N-acetyl-L-glutamate + CoA + H(+). Its pathway is amino-acid biosynthesis; L-arginine biosynthesis; L-ornithine and N-acetyl-L-glutamate from L-glutamate and N(2)-acetyl-L-ornithine (cyclic): step 1/1. It functions in the pathway amino-acid biosynthesis; L-arginine biosynthesis; N(2)-acetyl-L-ornithine from L-glutamate: step 1/4. Functionally, catalyzes two activities which are involved in the cyclic version of arginine biosynthesis: the synthesis of N-acetylglutamate from glutamate and acetyl-CoA as the acetyl donor, and of ornithine by transacetylation between N(2)-acetylornithine and glutamate. The chain is Arginine biosynthesis bifunctional protein ArgJ from Gloeobacter violaceus (strain ATCC 29082 / PCC 7421).